We begin with the raw amino-acid sequence, 37 residues long: uncharacterized protein (37 aa).

The helical transmembrane segment at 13 to 33 (TFLTIIVLLMIVFGIAIVALL) threads the bilayer.

It is found in the host membrane. This is an uncharacterized protein from Acidianus convivator (ABV).